We begin with the raw amino-acid sequence, 553 residues long: Glucose-6-phosphate isomerase (553 aa).

The Proton donor role is filled by E357. Residues H388 and K514 contribute to the active site. The disordered stretch occupies residues 524–553 (ITGAGSPPPQSDSSTDGLVRRYRTERGRAG). Residues 541–553 (LVRRYRTERGRAG) show a composition bias toward basic and acidic residues.

Belongs to the GPI family.

The protein resides in the cytoplasm. It catalyses the reaction alpha-D-glucose 6-phosphate = beta-D-fructose 6-phosphate. It functions in the pathway carbohydrate biosynthesis; gluconeogenesis. Its pathway is carbohydrate degradation; glycolysis; D-glyceraldehyde 3-phosphate and glycerone phosphate from D-glucose: step 2/4. In terms of biological role, catalyzes the reversible isomerization of glucose-6-phosphate to fructose-6-phosphate. This is Glucose-6-phosphate isomerase from Mycobacterium bovis (strain BCG / Tokyo 172 / ATCC 35737 / TMC 1019).